Reading from the N-terminus, the 328-residue chain is L-lactate dehydrogenase (328 aa).

NAD(+)-binding positions include valine 18, glutamate 39, lysine 46, tyrosine 71, and 85–86 (GA). Residues glutamine 88 and arginine 94 each coordinate substrate. NAD(+)-binding positions include serine 107, 124–126 (AAN), and serine 149. A substrate-binding site is contributed by 126 to 129 (NPVD). 154 to 157 (DSAR) contacts substrate. Positions 159 and 174 each coordinate beta-D-fructose 1,6-bisphosphate. The active-site Proton acceptor is histidine 181. Position 226 is a phosphotyrosine (tyrosine 226). Threonine 235 lines the substrate pocket.

This sequence belongs to the LDH/MDH superfamily. LDH family. In terms of assembly, homotetramer.

The protein localises to the cytoplasm. It carries out the reaction (S)-lactate + NAD(+) = pyruvate + NADH + H(+). Its pathway is fermentation; pyruvate fermentation to lactate; (S)-lactate from pyruvate: step 1/1. Its activity is regulated as follows. Allosterically activated by fructose 1,6-bisphosphate (FBP). In terms of biological role, catalyzes the conversion of lactate to pyruvate. The polypeptide is L-lactate dehydrogenase (Streptococcus thermophilus (strain ATCC BAA-250 / LMG 18311)).